Consider the following 376-residue polypeptide: uncharacterized protein (376 aa).

The protein belongs to the choline/ethanolamine kinase family.

This is an uncharacterized protein from Caenorhabditis elegans.